A 223-amino-acid chain; its full sequence is Cytotoxic T-lymphocyte protein 4 (223 aa).

The first 35 residues, 1 to 35, serve as a signal peptide directing secretion; that stretch reads MACLGLRRYKAQLQLPSRTWPFVALLTLLFIPVFS. Residues 36–145 form the Ig-like V-type domain; the sequence is EAIQVTQPSV…PPPYFVGMGN (110 aa). Topologically, residues 36 to 161 are extracellular; the sequence is EAIQVTQPSV…IDPEPCPDSD (126 aa). The interval 46–50 is homodimerization; sequence VLASS. 2 cysteine pairs are disulfide-bonded: Cys58–Cys129 and Cys85–Cys103. 2 N-linked (GlcNAc...) asparagine glycosylation sites follow: Asn108 and Asn113. The tract at residues 134–139 is important for interaction with CD80 and CD86; that stretch reads MYPPPY. Asn145 carries an N-linked (GlcNAc...) asparagine glycan. The interval 150 to 155 is homodimerization; the sequence is YVIDPE. A helical transmembrane segment spans residues 162 to 182; the sequence is FLLWILVAVSLGLFFYSFLVS. Topologically, residues 183-223 are cytoplasmic; sequence AVSLSKMLKKRSPLTTGVYVKMPPTEPECEKQFQPYFIPIN. Tyr201 carries the phosphotyrosine; by TXK and JAK2 modification.

Homodimer; disulfide-linked. Binds to CD80/B7-1 and CD86/B7.2. Interacts with ICOSLG. In terms of processing, N-glycosylation is important for dimerization. Phosphorylation at Tyr-201 prevents binding to the AP-2 adapter complex, blocks endocytosis, and leads to retention of CTLA4 on the cell surface. Widely expressed with highest levels in lymphoid tissues.

It localises to the cell membrane. Functionally, inhibitory receptor acting as a major negative regulator of T-cell responses. The affinity of CTLA4 for its natural B7 family ligands, CD80 and CD86, is considerably stronger than the affinity of their cognate stimulatory coreceptor CD28. The chain is Cytotoxic T-lymphocyte protein 4 (Ctla4) from Mus musculus (Mouse).